A 419-amino-acid polypeptide reads, in one-letter code: Tyrosine--tRNA ligase (419 aa).

Position 34 (tyrosine 34) interacts with L-tyrosine. Positions proline 39–histidine 48 match the 'HIGH' region motif. L-tyrosine contacts are provided by tyrosine 169 and glutamine 173. The 'KMSKS' region signature appears at lysine 229–serine 233. Lysine 232 contributes to the ATP binding site. An S4 RNA-binding domain is found at leucine 352–lysine 419.

The protein belongs to the class-I aminoacyl-tRNA synthetase family. TyrS type 1 subfamily. As to quaternary structure, homodimer.

The protein localises to the cytoplasm. It carries out the reaction tRNA(Tyr) + L-tyrosine + ATP = L-tyrosyl-tRNA(Tyr) + AMP + diphosphate + H(+). Functionally, catalyzes the attachment of tyrosine to tRNA(Tyr) in a two-step reaction: tyrosine is first activated by ATP to form Tyr-AMP and then transferred to the acceptor end of tRNA(Tyr). This Streptococcus agalactiae serotype Ia (strain ATCC 27591 / A909 / CDC SS700) protein is Tyrosine--tRNA ligase.